Consider the following 540-residue polypeptide: Glucose-6-phosphate isomerase (540 aa).

E351 (proton donor) is an active-site residue. Residues H382 and K506 contribute to the active site.

Belongs to the GPI family.

It localises to the cytoplasm. It carries out the reaction alpha-D-glucose 6-phosphate = beta-D-fructose 6-phosphate. The protein operates within carbohydrate biosynthesis; gluconeogenesis. It functions in the pathway carbohydrate degradation; glycolysis; D-glyceraldehyde 3-phosphate and glycerone phosphate from D-glucose: step 2/4. In terms of biological role, catalyzes the reversible isomerization of glucose-6-phosphate to fructose-6-phosphate. In Corynebacterium glutamicum (strain R), this protein is Glucose-6-phosphate isomerase.